A 412-amino-acid chain; its full sequence is WW domain-containing oxidoreductase (412 aa).

Positions Met1–Glu24 are disordered. A WW 1 domain is found at Asp16–Thr49. Positions Gly50–Cys55 match the Nuclear localization signal motif. Residues Gly57–Gln90 enclose the WW 2 domain. An NADP(+)-binding site is contributed by Gly128 to Gly134. Substrate is bound at residue Ser257. The Proton acceptor role is filled by Tyr290.

This sequence belongs to the short-chain dehydrogenases/reductases (SDR) family.

It is found in the cytoplasm. The protein resides in the mitochondrion. The protein localises to the golgi apparatus. Its subcellular location is the lysosome. Its function is as follows. Putative oxidoreductase. Acts as a tumor suppressor and plays a role in apoptosis. May function synergistically with p53/TP53 to control genotoxic stress-induced cell death. Plays a role in TGFB1 signaling and TGFB1-mediated cell death. May also play a role in tumor necrosis factor (TNF)-mediated cell death. Required for normal bone development. Inhibits Wnt signaling. The sequence is that of WW domain-containing oxidoreductase (wwox) from Danio rerio (Zebrafish).